Reading from the N-terminus, the 237-residue chain is Small ribosomal subunit protein eS4 (237 aa).

The S4 RNA-binding domain maps to 37 to 99 (VPLLIVLRDV…REEYYRIFPD (63 aa)).

It belongs to the eukaryotic ribosomal protein eS4 family.

This chain is Small ribosomal subunit protein eS4, found in Natronomonas pharaonis (strain ATCC 35678 / DSM 2160 / CIP 103997 / JCM 8858 / NBRC 14720 / NCIMB 2260 / Gabara) (Halobacterium pharaonis).